The sequence spans 132 residues: D-ribose pyranase (132 aa).

His-20 serves as the catalytic Proton donor. Substrate contacts are provided by residues Asp-28, His-99, and Tyr-121 to Asn-123.

The protein belongs to the RbsD / FucU family. RbsD subfamily. Homodecamer.

It is found in the cytoplasm. It catalyses the reaction beta-D-ribopyranose = beta-D-ribofuranose. The protein operates within carbohydrate metabolism; D-ribose degradation; D-ribose 5-phosphate from beta-D-ribopyranose: step 1/2. In terms of biological role, catalyzes the interconversion of beta-pyran and beta-furan forms of D-ribose. This Streptococcus uberis (strain ATCC BAA-854 / 0140J) protein is D-ribose pyranase.